The sequence spans 341 residues: 2-acylglycerol O-acyltransferase 3 (341 aa).

The next 2 membrane-spanning stretches (helical) occupy residues 29–49 (YVLT…VLLF) and 50–70 (TSLW…WDTP). N-linked (GlcNAc...) asparagine glycosylation is present at N126. A helical membrane pass occupies residues 137–157 (LFPGLRPWLAVLAGLFYLPVY).

The protein belongs to the diacylglycerol acyltransferase family. In terms of processing, ubiquitinated. Ubiquitination leads to proteasomal degradation. Selectively expressed in the digestive system. Highly expressed in the ileum, and at lower level in jejunum, duodenum, colon, cecum and the rectum. Not expressed in the stomach and the esophagus and trachea. Expressed at very low level in liver.

The protein localises to the endoplasmic reticulum membrane. It localises to the cytoplasm. The protein resides in the perinuclear region. The catalysed reaction is a 2-acylglycerol + an acyl-CoA = a 1,2-diacylglycerol + CoA. It carries out the reaction an acyl-CoA + a 1,2-diacyl-sn-glycerol = a triacyl-sn-glycerol + CoA. The enzyme catalyses 2-(9Z-octadecenoyl)-glycerol + (9Z)-octadecenoyl-CoA = 1,2-di-(9Z-octadecenoyl)-sn-glycerol + CoA. It catalyses the reaction 2-(9Z-octadecenoyl)-glycerol + hexadecanoyl-CoA = 1-hexadecanoyl-2-(9Z-octadecenoyl)-sn-glycerol + CoA. The catalysed reaction is 1,2-di-(9Z-octadecenoyl)-sn-glycerol + (9Z)-octadecenoyl-CoA = 1,2,3-tri-(9Z-octadecenoyl)-glycerol + CoA. It carries out the reaction 1-hexadecanoyl-2-(9Z-octadecenoyl)-sn-glycerol + hexadecanoyl-CoA = 1,3-dihexadecanoyl-2-(9Z-octadecenoyl)glycerol + CoA. The enzyme catalyses all-trans-retinol + hexadecanoyl-CoA = all-trans-retinyl hexadecanoate + CoA. It catalyses the reaction 1-O-(9Z-octadecenyl)-glycerol + (9Z)-octadecenoyl-CoA = 1-O-(9Z-octadecyl)-3-(9Z-octadecenoyl)-glycerol + CoA. The catalysed reaction is 1-O-(9Z-octadecyl)-3-(9Z-octadecenoyl)-glycerol + (9Z)-octadecenoyl-CoA = 1-O-(9Z-octadecenyl)-2,3-di-(9Z-octadecenoyl)glycerol + CoA. The protein operates within glycerolipid metabolism; triacylglycerol biosynthesis. Functionally, catalyzes the formation of diacylglycerol from 2-monoacylglycerol and fatty acyl-CoA. Also able to catalyze the terminal step in triacylglycerol synthesis by using diacylglycerol and fatty acyl-CoA as substrates. Has a preference toward palmitoyl-CoA and oleoyl-CoA. May be involved in absorption of dietary fat in the small intestine by catalyzing the resynthesis of triacylglycerol in enterocytes. Also able to use 1-monoalkylglycerol (1-MAkG) as an acyl acceptor for the synthesis of monoalkyl-monoacylglycerol (MAMAG). The protein is 2-acylglycerol O-acyltransferase 3 of Homo sapiens (Human).